Consider the following 167-residue polypeptide: Endoribonuclease YbeY (167 aa).

Residues His-131, His-135, and His-141 each coordinate Zn(2+).

The protein belongs to the endoribonuclease YbeY family. The cofactor is Zn(2+).

It localises to the cytoplasm. In terms of biological role, single strand-specific metallo-endoribonuclease involved in late-stage 70S ribosome quality control and in maturation of the 3' terminus of the 16S rRNA. The chain is Endoribonuclease YbeY from Rickettsia prowazekii (strain Madrid E).